We begin with the raw amino-acid sequence, 804 residues long: Exo-1,4-beta-xylosidase xlnD (804 aa).

The N-terminal stretch at 1–26 (MAHSMSRPVAATAAALLALALPQALA) is a signal peptide. N-linked (GlcNAc...) asparagine glycosylation is found at Asn29, Asn124, Asn148, Asn242, and Asn251. Asp315 is an active-site residue. N-linked (GlcNAc...) asparagine glycans are attached at residues Asn357, Asn390, Asn413, Asn444, Asn455, Asn573, Asn665, Asn696, and Asn718.

Belongs to the glycosyl hydrolase 3 family.

Its subcellular location is the secreted. It catalyses the reaction Hydrolysis of (1-&gt;4)-beta-D-xylans, to remove successive D-xylose residues from the non-reducing termini.. Its pathway is glycan degradation; xylan degradation. Xylan 1,4-beta-xylosidase involved in the hydrolysis of xylan, a major structural heterogeneous polysaccharide found in plant biomass representing the second most abundant polysaccharide in the biosphere, after cellulose. The protein is Exo-1,4-beta-xylosidase xlnD (xlnD) of Aspergillus awamori (Black koji mold).